The following is a 325-amino-acid chain: Cell division protein ZipA (325 aa).

At 1 to 5 (MQELR) the chain is on the periplasmic side. Residues 6–26 (LVLILVGALAIAALLFHGLWT) traverse the membrane as a helical segment. The Cytoplasmic portion of the chain corresponds to 27–325 (SRKETSSKFG…KQRVKVFCRK (299 aa)).

This sequence belongs to the ZipA family. As to quaternary structure, interacts with FtsZ via their C-terminal domains.

It localises to the cell inner membrane. Functionally, essential cell division protein that stabilizes the FtsZ protofilaments by cross-linking them and that serves as a cytoplasmic membrane anchor for the Z ring. Also required for the recruitment to the septal ring of downstream cell division proteins. The protein is Cell division protein ZipA of Aliivibrio fischeri (strain MJ11) (Vibrio fischeri).